A 278-amino-acid chain; its full sequence is Large ribosomal subunit protein uL2 (278 aa).

Disordered stretches follow at residues leucine 33–glycine 53 and arginine 221–arginine 278. Over residues isoleucine 269–arginine 278 the composition is skewed to basic residues.

Belongs to the universal ribosomal protein uL2 family. Part of the 50S ribosomal subunit. Forms a bridge to the 30S subunit in the 70S ribosome.

Functionally, one of the primary rRNA binding proteins. Required for association of the 30S and 50S subunits to form the 70S ribosome, for tRNA binding and peptide bond formation. It has been suggested to have peptidyltransferase activity; this is somewhat controversial. Makes several contacts with the 16S rRNA in the 70S ribosome. The polypeptide is Large ribosomal subunit protein uL2 (Novosphingobium aromaticivorans (strain ATCC 700278 / DSM 12444 / CCUG 56034 / CIP 105152 / NBRC 16084 / F199)).